Consider the following 426-residue polypeptide: Glucose-1-phosphate adenylyltransferase (426 aa).

Alpha-D-glucose 1-phosphate-binding positions include G165, 180–181 (EK), and S191.

It belongs to the bacterial/plant glucose-1-phosphate adenylyltransferase family. As to quaternary structure, homotetramer.

It catalyses the reaction alpha-D-glucose 1-phosphate + ATP + H(+) = ADP-alpha-D-glucose + diphosphate. It functions in the pathway glycan biosynthesis; glycogen biosynthesis. In terms of biological role, involved in the biosynthesis of ADP-glucose, a building block required for the elongation reactions to produce glycogen. Catalyzes the reaction between ATP and alpha-D-glucose 1-phosphate (G1P) to produce pyrophosphate and ADP-Glc. The polypeptide is Glucose-1-phosphate adenylyltransferase (Ruminiclostridium cellulolyticum (strain ATCC 35319 / DSM 5812 / JCM 6584 / H10) (Clostridium cellulolyticum)).